Consider the following 1484-residue polypeptide: MYSSSNSFLGGANSTRPGQQPYMQQQPPFSQFGQQQPQNQQTGLAPQPTGYNPQFSALGASQLQPQATGFPPGQIQPQYTGFPGVSPQPQQTQPTGFPASPQQTQYGGFPSLGQAPQIQVTSNTNIPLRTGQQTSSEIANSFQNASVATPTPPPKASGGKIPNIRLSFITAQDQAKFEQLFKSAVGDSQAMTGDKAKELLLRSKLPGSDLSRIWVLSDTTKSGQLLFPEFALAMYLCNLRITGRDIPSVLPETIKNEVSSMVDIISFQVPDTQPEPVAKTNVPSFDAPLLENKLAPPAPQQPRPQQPSNSQLLSQLTAQPTGFPPSSGYQANVAVQGQNQGLVPQATVFPGQASSQNLQPPQMGILNNPQPTGYTGPRPPMPPMPTGFGSNLSPSQTGGLVAQPTGIPGQWGFVNAPASGLPNIEALKQQLMPQPGREGGFSAAGLSGNASIPWAITKEEKKIYDDLFRAWDGLHKGFIGGDTAIEIMGQSGLARNDLEAIWTLADPHNRGRLNMDEFAVAMHLIYRKLNGYPVPNRLPPELIPPSTRNLNDSIGTIKSMLSQDAEHRKATGAFLQPQKTGVSYLKEHSFRGGAVSPGAGRKDATLFKNNDEAAAGYRSSARRRVGNSGRTPSPAASQASEEELSVEQLKKKIRETQIMLDAVDFEDENRAEEEDALDRRDRREAESLMDRIRRVQDDIDTHPHAALRSLDTGAERRTLRRQLQAYEDQVPQIASEVRRVEREIAEAKLELFRLKDAKAHPNSALNIVGTGPGGAVTEADRIKARARARMQARAAELAGRPAPASQDDEEAATRRLEGENARVKAEREKNDSMTRDVEESVKEFARSLEDSLKEGEESSTREHERRRWEDALGVEDVIRDFIYDLNRGSRTAHIRKEEDSRGSSLEPRSRESSAHTSTAARPSPPASVGLTGASPVTHEDRVAAARERAQRRIAERMAAAGLKPQTDAIETLAQRQERERREREERVKRAEEEDAKREQERQRRIAEEQRTPSTQAAKPAGKKPPPAPPRGSRKGRTDSTGQADAKKAAEGSAKTEQLALEQALKEEQQAQEEETKRLETEAKQREDEFAREQQEQEARLRALEEQVRQGKIKKQEEKRRREEAKKAAQEQEARLARQRAELEAAKERERQLQLELEGLDESSSDEEGPVDIATPQDSTPTQSQVLPATSDPEPPAPPTPVAEPPTVPEPEQTTASSSPESSRAVSLRLSPETESKNPYFRRNVSQPTDYPPPTPPEVPQVSSTQMPDTQSTNPFHRLAQQQQPPPPPPTQPAFTGSAPLARKTRARPEADDDWSAAESDFESSDDEDDRAGGGSAKQLASILFGTMAPPRPLSAMDTQSPSSKSATPVQGSSIPPVPPIPAEIEPSSVADGASPPPPPPPPPPPPPAAAPPPLPSAESPAGIPPPPPPPMAPPAPPPPPGPPAAAPAGAPDRSALLASIQAGKGLRKVQTNDRSTSTSAGRVL.

Polar residues predominate over residues 1 to 16 (MYSSSNSFLGGANSTR). Residues 1-100 (MYSSSNSFLG…QTQPTGFPAS (100 aa)) form a disordered region. The segment covering 17–47 (PGQQPYMQQQPPFSQFGQQQPQNQQTGLAPQ) has biased composition (low complexity). The span at 49-67 (TGYNPQFSALGASQLQPQA) shows a compositional bias: polar residues. Residues 173 to 261 (DQAKFEQLFK…ETIKNEVSSM (89 aa)) form the EH 1 domain. The EF-hand 1 domain maps to 205 to 240 (LPGSDLSRIWVLSDTTKSGQLLFPEFALAMYLCNLR). Disordered regions lie at residues 289–331 (LLEN…GYQA) and 351–384 (GQAS…MPPM). A compositionally biased stretch (pro residues) spans 296-305 (PPAPQQPRPQ). Over residues 306–316 (QPSNSQLLSQL) the composition is skewed to low complexity. The segment covering 352-370 (QASSQNLQPPQMGILNNPQ) has biased composition (polar residues). The 90-residue stretch at 460 to 549 (EKKIYDDLFR…PELIPPSTRN (90 aa)) folds into the EH 2 domain. Positions 493–528 (LARNDLEAIWTLADPHNRGRLNMDEFAVAMHLIYRK) constitute an EF-hand 2 domain. 3 disordered regions span residues 615 to 643 (AGYR…SEEE), 793 to 866 (RAAE…HERR), and 893 to 1484 (HIRK…GRVL). Over residues 628–639 (SGRTPSPAASQA) the composition is skewed to polar residues. Coiled coils occupy residues 635 to 760 (AASQ…AKAH) and 807 to 843 (DDEE…SVKE). Composition is skewed to basic and acidic residues over residues 811 to 866 (AATR…HERR), 894 to 913 (IRKE…RESS), 937 to 955 (THED…RIAE), 975 to 1010 (RQER…EEQR), and 1063 to 1152 (ALKE…ERQL). Coiled-coil stretches lie at residues 965-1011 (QTDA…EQRT) and 1052-1165 (SAKT…SSSD). Positions 1157–1169 (EGLDESSSDEEGP) are enriched in acidic residues. Over residues 1175–1187 (PQDSTPTQSQVLP) the composition is skewed to polar residues. A compositionally biased stretch (pro residues) spans 1192 to 1208 (PEPPAPPTPVAEPPTVP). Residues 1209–1222 (EPEQTTASSSPESS) are compositionally biased toward low complexity. A compositionally biased stretch (pro residues) spans 1249–1258 (DYPPPTPPEV). Residues 1265–1274 (QMPDTQSTNP) show a composition bias toward polar residues. The segment covering 1310–1329 (ADDDWSAAESDFESSDDEDD) has biased composition (acidic residues). Residues 1356-1371 (MDTQSPSSKSATPVQG) are compositionally biased toward polar residues. A compositionally biased stretch (low complexity) spans 1382–1393 (AEIEPSSVADGA). 2 stretches are compositionally biased toward pro residues: residues 1394 to 1415 (SPPP…PPLP) and 1422 to 1445 (GIPP…PPAA). The region spanning 1452-1469 (DRSALLASIQAGKGLRKV) is the WH2 domain. Over residues 1472 to 1484 (NDRSTSTSAGRVL) the composition is skewed to polar residues.

This sequence belongs to the PAN1 family. In terms of assembly, component of the PAN1 actin cytoskeleton-regulatory complex.

The protein resides in the cell membrane. It localises to the endosome membrane. It is found in the cytoplasm. The protein localises to the cytoskeleton. Its subcellular location is the actin patch. Functionally, component of the PAN1 actin cytoskeleton-regulatory complex required for the internalization of endosomes during actin-coupled endocytosis. The complex links the site of endocytosis to the cell membrane-associated actin cytoskeleton. Mediates uptake of external molecules and vacuolar degradation of plasma membrane proteins. Plays a role in the proper organization of the cell membrane-associated actin cytoskeleton and promotes its destabilization. The protein is Actin cytoskeleton-regulatory complex protein pan1 (pan1) of Emericella nidulans (strain FGSC A4 / ATCC 38163 / CBS 112.46 / NRRL 194 / M139) (Aspergillus nidulans).